A 470-amino-acid chain; its full sequence is Dynein axonemal assembly factor 11 (470 aa).

4 LRR repeats span residues 20-43 (IFSL…DKWC), 44-65 (RELK…VSKL), 66-89 (KKLE…GCES), and 90-110 (LQKL…NSLQ). Residues 128 to 146 (YEGYRQYVVATLPQLKWLD) enclose the LRRCT domain. Residues 177–288 (LRKRAAEREK…NRSEEELKKK (112 aa)) are a coiled coil. The interval 182 to 265 (AEREKATNNL…SQYTPESRLE (84 aa)) is disordered. Basic and acidic residues predominate over residues 194–213 (KQKEGRKAQEKKPGFDRRWY). The CS domain occupies 303–395 (VNESKLDFSL…TEMIQTKRAK (93 aa)). A disordered region spans residues 447–470 (HRNSARDTADSEDFIDNAEVPPLV).

The protein belongs to the tilB family.

The protein resides in the cytoplasm. The protein localises to the cell projection. It is found in the cilium. Its subcellular location is the dynein axonemal particle. It localises to the flagellum. Functionally, involved in dynein arm assembly, is important for expression and transporting outer dynein arm (ODA) proteins from the cytoplasm to the cilia. The polypeptide is Dynein axonemal assembly factor 11 (dnaaf11) (Xenopus tropicalis (Western clawed frog)).